The sequence spans 557 residues: CTP synthase (557 aa).

Positions 1–267 (MAKYIFVTGG…GAYLTQRLGL (267 aa)) are amidoligase domain. Serine 13 is a binding site for CTP. Serine 13 contributes to the UTP binding site. 14–19 (SVGKGI) lines the ATP pocket. Tyrosine 54 contributes to the L-glutamine binding site. Aspartate 71 contacts ATP. Aspartate 71 and glutamate 141 together coordinate Mg(2+). CTP contacts are provided by residues 148–150 (DIE), 188–193 (KTKPTQ), and lysine 224. Residues 188–193 (KTKPTQ) and lysine 224 contribute to the UTP site. A Glutamine amidotransferase type-1 domain is found at 292–535 (AIALVGKYVE…VAAAAKTFRE (244 aa)). Glycine 354 is an L-glutamine binding site. Residue cysteine 381 is the Nucleophile; for glutamine hydrolysis of the active site. L-glutamine is bound by residues 382–385 (LGMQ), glutamate 406, and arginine 463. Catalysis depends on residues histidine 508 and glutamate 510. A disordered region spans residues 536-557 (GDQRPLPLEQNGAVTEHEPHSR).

It belongs to the CTP synthase family. Homotetramer.

The enzyme catalyses UTP + L-glutamine + ATP + H2O = CTP + L-glutamate + ADP + phosphate + 2 H(+). The catalysed reaction is L-glutamine + H2O = L-glutamate + NH4(+). It catalyses the reaction UTP + NH4(+) + ATP = CTP + ADP + phosphate + 2 H(+). The protein operates within pyrimidine metabolism; CTP biosynthesis via de novo pathway; CTP from UDP: step 2/2. Allosterically activated by GTP, when glutamine is the substrate; GTP has no effect on the reaction when ammonia is the substrate. The allosteric effector GTP functions by stabilizing the protein conformation that binds the tetrahedral intermediate(s) formed during glutamine hydrolysis. Inhibited by the product CTP, via allosteric rather than competitive inhibition. In terms of biological role, catalyzes the ATP-dependent amination of UTP to CTP with either L-glutamine or ammonia as the source of nitrogen. Regulates intracellular CTP levels through interactions with the four ribonucleotide triphosphates. This chain is CTP synthase, found in Roseiflexus sp. (strain RS-1).